A 378-amino-acid polypeptide reads, in one-letter code: Ferredoxin--NADP reductase, embryo isozyme, chloroplastic (378 aa).

Residues 1-62 (MASALGAQAS…SRHMNKIFSM (62 aa)) constitute a chloroplast transit peptide. The FAD-binding FR-type domain maps to 93-221 (KEPYTATIVS…TGPSGKIMLL (129 aa)). Residues 153 to 156 (RLYS), 174 to 176 (CVR), tyrosine 180, 195 to 197 (ICS), and threonine 237 contribute to the FAD site. Positions 156 and 176 each coordinate NADP(+). NADP(+) contacts are provided by residues threonine 237, 269-270 (VA), 299-300 (SR), lysine 309, 337-338 (GL), and glutamate 376.

The protein belongs to the ferredoxin--NADP reductase type 1 family. It depends on FAD as a cofactor.

It is found in the plastid. It localises to the chloroplast. It catalyses the reaction 2 reduced [2Fe-2S]-[ferredoxin] + NADP(+) + H(+) = 2 oxidized [2Fe-2S]-[ferredoxin] + NADPH. Its pathway is energy metabolism; photosynthesis. Functionally, may play a key role in regulating the relative amounts of cyclic and non-cyclic electron flow to meet the demands of the plant for ATP and reducing power. Is involved in nitrate assimilation. The sequence is that of Ferredoxin--NADP reductase, embryo isozyme, chloroplastic from Oryza sativa subsp. japonica (Rice).